Consider the following 480-residue polypeptide: MSANTISTKVQSKDLNGLSLIAAHSHISGLGLDDNLQPKESGQGMVGQLKARKAAGVILKMIQAGKIAGRAVLVAGPPSTGKTAIAMGLSQNLGSEVPFTAIAGSEIFSLELSKTESLTQAFRKSIGIKIKEETEMIEGEVVEIQIDRSITGGHKQGKLTIKTTDMETIYELGNKMIEGLTKEKVLAGDVISIDKASGKITKLGKSFTRARDYDAMGPETKFVQCPEGELQKRKEVVHTVSLHEIDVINSRQQGFLALFSGDTGEIRSEVRDQINTKVAEWKEEGKAEIVPGVLFIDEVHMLDIECFSFINRALEDDFAPIVIMATNRGISKTRGTNYKSPHGLPMDLLDRSIIIHTAPYNADEIRTILLIRATEEEVELTGDALALLTKIGQETSLRYASNLISVSQQIALKRRSNSVDLPDIKRSYMLFLDSDRSVQYLEEFSTQFIDDSGNVTFGTNDASVKQTKGAANGEDKMETD.

Position 76 to 83 (76 to 83 (GPPSTGKT)) interacts with ATP.

Belongs to the RuvB family. As to quaternary structure, may form heterododecamers with RVB1. Component of the SWR1 chromatin remodeling complex, the INO80 chromatin remodeling complex, and of the R2TP complex.

The protein localises to the nucleus. It catalyses the reaction ATP + H2O = ADP + phosphate + H(+). In terms of biological role, DNA helicase which participates in several chromatin remodeling complexes, including the SWR1 and the INO80 complexes. The SWR1 complex mediates the ATP-dependent exchange of histone H2A for the H2A variant HZT1 leading to transcriptional regulation of selected genes by chromatin remodeling. The INO80 complex remodels chromatin by shifting nucleosomes and is involved in DNA repair. Also involved in pre-rRNA processing. The sequence is that of RuvB-like helicase 2 (RVB2) from Debaryomyces hansenii (strain ATCC 36239 / CBS 767 / BCRC 21394 / JCM 1990 / NBRC 0083 / IGC 2968) (Yeast).